Consider the following 406-residue polypeptide: Imidazolonepropionase (406 aa).

Residues H72 and H74 each coordinate Fe(3+). H72 and H74 together coordinate Zn(2+). R81, Y144, and H177 together coordinate 4-imidazolone-5-propanoate. Y144 contributes to the N-formimidoyl-L-glutamate binding site. A Fe(3+)-binding site is contributed by H242. Residue H242 participates in Zn(2+) binding. Q245 contacts 4-imidazolone-5-propanoate. A Fe(3+)-binding site is contributed by D317. D317 provides a ligand contact to Zn(2+). N-formimidoyl-L-glutamate-binding residues include N319 and G321. T322 is a binding site for 4-imidazolone-5-propanoate.

The protein belongs to the metallo-dependent hydrolases superfamily. HutI family. The cofactor is Zn(2+). It depends on Fe(3+) as a cofactor.

Its subcellular location is the cytoplasm. It carries out the reaction 4-imidazolone-5-propanoate + H2O = N-formimidoyl-L-glutamate. Its pathway is amino-acid degradation; L-histidine degradation into L-glutamate; N-formimidoyl-L-glutamate from L-histidine: step 3/3. Functionally, catalyzes the hydrolytic cleavage of the carbon-nitrogen bond in imidazolone-5-propanoate to yield N-formimidoyl-L-glutamate. It is the third step in the universal histidine degradation pathway. In Yersinia enterocolitica serotype O:8 / biotype 1B (strain NCTC 13174 / 8081), this protein is Imidazolonepropionase.